The chain runs to 270 residues: Replication protein A 32 kDa subunit (270 aa).

Residue Met-1 is modified to N-acetylmethionine. 2 positions are modified to phosphoserine; by PRKDC: Ser-4 and Ser-8. A disordered region spans residues 20 to 41; that stretch reads YTQSPGGFGSPTPSQAEKKSRV. Phosphothreonine; by PRKDC is present on Thr-21. Residue Ser-23 is modified to Phosphoserine; by CDK2. At Ser-29 the chain carries Phosphoserine; by CDK1. Ser-33 is modified (phosphoserine; by PRKDC). Residues Lys-37 and Lys-38 each participate in a glycyl lysine isopeptide (Lys-Gly) (interchain with G-Cter in ubiquitin) cross-link. The segment at residues 74-148 is a DNA-binding region (OB); sequence VTIVGIIRHA…KSLVAFKIIP (75 aa). Positions 171-192 are disordered; sequence KPNSQASAGRPSMSNPGMSEPG. The segment at 187-270 is interaction with RAD52, TIPIN, UNG and XPA; that stretch reads GMSEPGNFSG…DDHFKSTDAE (84 aa).

This sequence belongs to the replication factor A protein 2 family. As to quaternary structure, component of the replication protein A complex (RPA/RP-A), a heterotrimeric complex composed of RPA1, RPA2 and RPA3. Interacts with PRPF19; the PRP19-CDC5L complex is recruited to the sites of DNA repair where it ubiquitinates the replication protein A complex (RPA). Interacts with SERTAD3. Interacts with TIPIN. Interacts with TIMELESS. Interacts with PPP4R2; the interaction is direct, DNA damage-dependent and mediates the recruitment of the PP4 catalytic subunit PPP4C. Interacts (hyperphosphorylated) with RAD51. Interacts with SMARCAL1; the interaction is direct and mediates the recruitment to the RPA complex of SMARCAL1. Interacts with RAD52 and XPA; those interactions are direct and associate RAD52 and XPA to the RPA complex. Interacts with FBH1. Interacts with ETAA1; the interaction is direct and promotes ETAA1 recruitment at stalled replication forks. Interacts with DDI2. Interacts (in unphosphorylated form via N-terminus) with EIF4EBP3; the interaction enhances EIF4EBP3-mediated inhibition of EIF4E-mediated mRNA nuclear export. Interacts with nuclear UNG (isoform 2); this interaction mediates UNG recruitment to RPA-coated single-stranded DNA at stalled replication forks. In terms of processing, differentially phosphorylated throughout the cell cycle, becoming phosphorylated at the G1-S transition and dephosphorylated in late mitosis. Mainly phosphorylated at Ser-23 and Ser-29, by cyclin A-CDK2 and cyclin B-CDK1, respectively during DNA replication and mitosis. Dephosphorylation may require the serine/threonine-protein phosphatase 4. Phosphorylation at Ser-23 and Ser-29 is a prerequisite for further phosphorylation. Becomes hyperphosphorylated on additional residues including Ser-4, Ser-8, Thr-21 and Ser-33 in response to DNA damage. Hyperphosphorylation is mediated by ATM, ATR and PRKDC. Primarily recruited to DNA repair nuclear foci as a hypophosphorylated form it undergoes subsequent hyperphosphorylation, catalyzed by ATR. Hyperphosphorylation is required for RAD51 recruitment to chromatin and efficient DNA repair. Phosphorylation at Thr-21 depends upon RFWD3 presence. Post-translationally, DNA damage-induced 'Lys-63'-linked polyubiquitination by PRPF19 mediates ATRIP recruitment to the RPA complex at sites of DNA damage and activation of ATR. Ubiquitinated by RFWD3 at stalled replication forks in response to DNA damage: ubiquitination by RFWD3 does not lead to degradation by the proteasome and promotes removal of the RPA complex from stalled replication forks, promoting homologous recombination.

It localises to the nucleus. The protein resides in the PML body. In terms of biological role, as part of the heterotrimeric replication protein A complex (RPA/RP-A), binds and stabilizes single-stranded DNA intermediates, that form during DNA replication or upon DNA stress. It prevents their reannealing and in parallel, recruits and activates different proteins and complexes involved in DNA metabolism. Thereby, it plays an essential role both in DNA replication and the cellular response to DNA damage. In the cellular response to DNA damage, the RPA complex controls DNA repair and DNA damage checkpoint activation. Through recruitment of ATRIP activates the ATR kinase a master regulator of the DNA damage response. It is required for the recruitment of the DNA double-strand break repair factors RAD51 and RAD52 to chromatin in response to DNA damage. Also recruits to sites of DNA damage proteins like XPA and XPG that are involved in nucleotide excision repair and is required for this mechanism of DNA repair. Also plays a role in base excision repair (BER) probably through interaction with UNG. Also recruits SMARCAL1/HARP, which is involved in replication fork restart, to sites of DNA damage. May also play a role in telomere maintenance. The chain is Replication protein A 32 kDa subunit from Mus musculus (Mouse).